The sequence spans 451 residues: PTS system cellobiose-specific EIIC component (451 aa).

In terms of domain architecture, PTS EIIC type-3 spans 8-423; that stretch reads LEDRVMPVAG…FIAFAIYYPF (416 aa). 10 helical membrane passes run 31 to 51, 72 to 92, 104 to 124, 138 to 158, 187 to 207, 227 to 247, 250 to 270, 293 to 313, 347 to 367, and 407 to 427; these read GIIL…VGFL, LLYP…FGVA, LSAG…QVPF, GIPV…LAIV, FVAL…RLIL, LSVL…VQLL, TGLH…LSLM, FFDL…ALTM, IVMN…LVVV, and ILQI…FSIW.

It localises to the cell membrane. In terms of biological role, the phosphoenolpyruvate-dependent sugar phosphotransferase system (sugar PTS), a major carbohydrate active transport system, catalyzes the phosphorylation of incoming sugar substrates concomitantly with their translocation across the cell membrane. The enzyme II CelABD PTS system is involved in cellobiose transport. The polypeptide is PTS system cellobiose-specific EIIC component (Geobacillus stearothermophilus (Bacillus stearothermophilus)).